The primary structure comprises 78 residues: Large ribosomal subunit protein bL28 (78 aa).

The tract at residues 1–28 (MSRRCQVRGTKPEFGNNVSHSQRHTKRR) is disordered.

This sequence belongs to the bacterial ribosomal protein bL28 family.

The chain is Large ribosomal subunit protein bL28 from Cutibacterium acnes (strain DSM 16379 / KPA171202) (Propionibacterium acnes).